The sequence spans 292 residues: Phosphatidylglycerol--prolipoprotein diacylglyceryl transferase (292 aa).

7 helical membrane passes run 21 to 41, 60 to 80, 98 to 118, 124 to 144, 198 to 218, 225 to 245, and 258 to 278; these read VSLHWYGLMYLVGFVFAMWLA, LLYAGFLGVFLGGRIGYVLFY, GGMSFHGGLIGVIVVMLVFAH, FFQVADFIAPLIPFGLGAGRL, SQLYELILEGVVLFIILNLFI, GAVSGLFLIGYGAFRIIVEFF, and ISMGQILSLPMILAGVIMMIW. Arg143 serves as a coordination point for a 1,2-diacyl-sn-glycero-3-phospho-(1'-sn-glycerol).

This sequence belongs to the Lgt family.

Its subcellular location is the cell inner membrane. It carries out the reaction L-cysteinyl-[prolipoprotein] + a 1,2-diacyl-sn-glycero-3-phospho-(1'-sn-glycerol) = an S-1,2-diacyl-sn-glyceryl-L-cysteinyl-[prolipoprotein] + sn-glycerol 1-phosphate + H(+). It functions in the pathway protein modification; lipoprotein biosynthesis (diacylglyceryl transfer). Its function is as follows. Catalyzes the transfer of the diacylglyceryl group from phosphatidylglycerol to the sulfhydryl group of the N-terminal cysteine of a prolipoprotein, the first step in the formation of mature lipoproteins. This Erwinia tasmaniensis (strain DSM 17950 / CFBP 7177 / CIP 109463 / NCPPB 4357 / Et1/99) protein is Phosphatidylglycerol--prolipoprotein diacylglyceryl transferase.